We begin with the raw amino-acid sequence, 410 residues long: MAYSTSVIRRLAPSEKFFAETQTFTSITVLLDGTVDIDAMADAFDALLEAYPVYAGHLEPDSDGGFELVADDLLHPGLWVQFEGDPAPTDQLDQGVALIYLLVKPDSTPVEVTLFIHHSLADGTHMAGLLFELFARYTEVVTTGSAGPVSPNPAPEPIETVLEQRGIRKQQRSGLDRFIPAMFAYELPPKRVTTRSAAERPAAVPTTRCRLSKAETSSLVKYGRVNRLFVNNLISAAILLAEWQVRRTPHIPIPYVYNVNLRALVEPPVSATGCTLAIGVATYLAHITPQTTMVELARGIADMFQADLADGVVQQSLLHFNMQYEGAIPGLPDVVLSTNLGNAVAMSTPPGLEVVGVQSQFYRASSAVIDVYSFGVVGGELLIEHHVDAAETTIDLIRSLLRSVVSEHQH.

The Proton acceptor role is filled by His118.

Belongs to the acyltransferase PapA5 family. In terms of assembly, monomer. Interacts directly with the acyl carrier protein (ACP) domain of the mycocerosic acid synthase (mas) protein.

The catalysed reaction is 2 a mycocerosyl-[mycocerosic acid synthase] + a phthiocerol = a dimycocerosyl phthiocerol + 2 holo-[mycocerosic acid synthase].. The enzyme catalyses 2 a mycocerosyl-[mycocerosic acid synthase] + a phthiodiolone = a dimycocerosyl phthiodiolone + 2 holo-[mycocerosic acid synthase].. It catalyses the reaction 2 a mycocerosyl-[mycocerosic acid synthase] + a phenolphthiocerol = a dimycocerosyl phenolphthiocerol + 2 holo-[mycocerosic acid synthase].. In terms of biological role, catalyzes diesterification of phthiocerol, phthiodiolone, and phenolphthiocerol with mycocerosic acids, the final step in the phthiocerol, phthiodiolone and phenolphthiocerol dimycocerosate esters (PDIM) synthesis. Can directly transfer the mycocerosate bound to the mycocerosic acid synthase (mas) onto the substrate alcohols. In Mycobacterium sp. (strain JLS), this protein is Phthiocerol/phthiodiolone dimycocerosyl transferase (papA5).